Reading from the N-terminus, the 512-residue chain is PTS system mannitol-specific EIICB component (512 aa).

Residues 1–28 (MSQTEEKKGIGRRVQAFGSFLSSMIMPN) lie on the Cytoplasmic side of the membrane. A PTS EIIC type-2 domain is found at 17–349 (FGSFLSSMIM…MKFTKEPKQD (333 aa)). Residues 29-50 (IGAFIAWGFIAAIFIDNGWFPN) traverse the membrane as a helical segment. At 51–54 (KDLA) the chain is on the extracellular side. The chain crosses the membrane as a helical span at residues 55 to 75 (TLAGPMITYLIPLLIAFSGGR). Over 76 to 139 (LIYDLRGGII…QGFEMLFNNF (64 aa)) the chain is Cytoplasmic. Residues 140–161 (SAGILGFIMTIAGFKILAPLMK) traverse the membrane as a helical segment. Residues 162–170 (FIMHILSVA) are Extracellular-facing. Residues 171-191 (VEALVHAHLLPLVSILVEPAK) traverse the membrane as a helical segment. The Cytoplasmic portion of the chain corresponds to 192 to 278 (IVFLNNAINH…VLMRPLLFIA (87 aa)). Residues 279–298 (VILGGMTGVATYQATGFGFK) form a helical membrane-spanning segment. Residues 299 to 318 (SPASPGSFIVYCLNAPRGEF) lie on the Extracellular side of the membrane. The helical transmembrane segment at 319-340 (LHMLLGVFLATLVSFVVAALIM) threads the bilayer. The Cytoplasmic portion of the chain corresponds to 341–512 (KFTKEPKQDL…LNNLKKDDQA (172 aa)). Residues 365 to 376 (SSVASKLVSSDK) show a composition bias toward low complexity. Positions 365 to 401 (SSVASKLVSSDKNVNTEENASGNVSETSSLDDDPEAL) are disordered. Positions 380 to 392 (TEENASGNVSETS) are enriched in polar residues. Positions 419–512 (NHVIFACDAG…LNNLKKDDQA (94 aa)) constitute a PTS EIIB type-2 domain. Residue Cys-425 is the Phosphocysteine intermediate; for EIIB activity of the active site. Position 425 is a phosphocysteine; by EIIA (Cys-425).

In terms of assembly, homodimer.

Its subcellular location is the cell membrane. The catalysed reaction is D-mannitol(out) + N(pros)-phospho-L-histidyl-[protein] = D-mannitol 1-phosphate(in) + L-histidyl-[protein]. Its function is as follows. The phosphoenolpyruvate-dependent sugar phosphotransferase system (sugar PTS), a major carbohydrate active transport system, catalyzes the phosphorylation of incoming sugar substrates concomitantly with their translocation across the cell membrane. The enzyme II CmtAB PTS system is involved in D-mannitol transport. The protein is PTS system mannitol-specific EIICB component (mtlA) of Staphylococcus aureus (strain MRSA252).